The sequence spans 58 residues: Small ribosomal subunit protein bS21 (58 aa).

Residues 35-58 (REHYEKPSVKKKKKSEAARKRKFK) form a disordered region. The segment covering 43–58 (VKKKKKSEAARKRKFK) has biased composition (basic residues).

This sequence belongs to the bacterial ribosomal protein bS21 family.

This is Small ribosomal subunit protein bS21 from Clostridium botulinum (strain Alaska E43 / Type E3).